Here is a 709-residue protein sequence, read N- to C-terminus: Polyribonucleotide nucleotidyltransferase (709 aa).

Residues aspartate 485 and aspartate 491 each contribute to the Mg(2+) site. A KH domain is found at 552 to 611; the sequence is PRIHTMKIDPKKIKDVIGKGGATIRALTEETGTSIDIDDDGTVKIAATDNNAAKRVMERI. In terms of domain architecture, S1 motif spans 621–689; it reads NAIYKGKVTR…RQGRIRLTMK (69 aa).

The protein belongs to the polyribonucleotide nucleotidyltransferase family. In terms of assembly, component of the RNA degradosome, which is a multiprotein complex involved in RNA processing and mRNA degradation. Requires Mg(2+) as cofactor.

The protein resides in the cytoplasm. The enzyme catalyses RNA(n+1) + phosphate = RNA(n) + a ribonucleoside 5'-diphosphate. Functionally, involved in mRNA degradation. Catalyzes the phosphorolysis of single-stranded polyribonucleotides processively in the 3'- to 5'-direction. The sequence is that of Polyribonucleotide nucleotidyltransferase from Glaesserella parasuis serovar 5 (strain SH0165) (Haemophilus parasuis).